A 267-amino-acid chain; its full sequence is Actin maturation protease (267 aa).

Residues 1–32 (MSNISSVAPPPPPPPMIVTPSTPATTKERPVG) form a disordered region. The span at 8–17 (APPPPPPPMI) shows a compositional bias: pro residues. Residues 74 to 188 (SIVQVGPTCG…WALIVGYLVD (115 aa)) are peptidase C39-like. Cys82 is an active-site residue.

The protein belongs to the ACTMAP family.

The enzyme catalyses N-terminal N(alpha)-acetyl-L-cysteinyl-L-aspartyl-[protein] + H2O = N-terminal L-aspartyl-[protein] + N-acetyl-L-cysteine. Actin maturation protease that specifically mediates the cleavage of immature acetylated N-terminal actin, thereby contributing to actin maturation. In Drosophila melanogaster (Fruit fly), this protein is Actin maturation protease.